A 93-amino-acid chain; its full sequence is UPF0521 protein A (93 aa).

Residues Ser-2–Thr-58 adopt a coiled-coil conformation.

The protein belongs to the UPF0521 family.

This chain is UPF0521 protein A, found in Dictyostelium discoideum (Social amoeba).